Consider the following 127-residue polypeptide: Fluoride-specific ion channel FluC (127 aa).

The next 4 membrane-spanning stretches (helical) occupy residues 4-24 (LLLV…VGVG), 36-56 (GTFT…SWLA), 72-92 (VGVL…ALMI), and 101-121 (FTYS…GLLV). Na(+) contacts are provided by G76 and T79.

It belongs to the fluoride channel Fluc/FEX (TC 1.A.43) family.

It localises to the cell inner membrane. It carries out the reaction fluoride(in) = fluoride(out). Its activity is regulated as follows. Na(+) is not transported, but it plays an essential structural role and its presence is essential for fluoride channel function. Its function is as follows. Fluoride-specific ion channel. Important for reducing fluoride concentration in the cell, thus reducing its toxicity. This chain is Fluoride-specific ion channel FluC, found in Caulobacter vibrioides (strain ATCC 19089 / CIP 103742 / CB 15) (Caulobacter crescentus).